Here is a 133-residue protein sequence, read N- to C-terminus: ATP synthase epsilon chain, chloroplastic (133 aa).

The protein belongs to the ATPase epsilon chain family. In terms of assembly, F-type ATPases have 2 components, CF(1) - the catalytic core - and CF(0) - the membrane proton channel. CF(1) has five subunits: alpha(3), beta(3), gamma(1), delta(1), epsilon(1). CF(0) has three main subunits: a, b and c.

The protein localises to the plastid. Its subcellular location is the chloroplast thylakoid membrane. Produces ATP from ADP in the presence of a proton gradient across the membrane. The chain is ATP synthase epsilon chain, chloroplastic from Phaeodactylum tricornutum (strain CCAP 1055/1).